Reading from the N-terminus, the 674-residue chain is tRNA 5-methylaminomethyl-2-thiouridine biosynthesis bifunctional protein MnmC (674 aa).

The tract at residues 1 to 237 (MLTSYQLESP…KREMTVGELN (237 aa)) is tRNA (mnm(5)s(2)U34)-methyltransferase. The segment at 270 to 674 (VGAGLAGANT…IRDLKRSQIL (405 aa)) is FAD-dependent cmnm(5)s(2)U34 oxidoreductase.

In the N-terminal section; belongs to the methyltransferase superfamily. tRNA (mnm(5)s(2)U34)-methyltransferase family. It in the C-terminal section; belongs to the DAO family. The cofactor is FAD.

It is found in the cytoplasm. The catalysed reaction is 5-aminomethyl-2-thiouridine(34) in tRNA + S-adenosyl-L-methionine = 5-methylaminomethyl-2-thiouridine(34) in tRNA + S-adenosyl-L-homocysteine + H(+). In terms of biological role, catalyzes the last two steps in the biosynthesis of 5-methylaminomethyl-2-thiouridine (mnm(5)s(2)U) at the wobble position (U34) in tRNA. Catalyzes the FAD-dependent demodification of cmnm(5)s(2)U34 to nm(5)s(2)U34, followed by the transfer of a methyl group from S-adenosyl-L-methionine to nm(5)s(2)U34, to form mnm(5)s(2)U34. This is tRNA 5-methylaminomethyl-2-thiouridine biosynthesis bifunctional protein MnmC from Marinomonas sp. (strain MWYL1).